Consider the following 1265-residue polypeptide: DNA-directed RNA polymerase subunit beta'' (1265 aa).

Zn(2+)-binding residues include C223, C297, C304, and C307.

The protein belongs to the RNA polymerase beta' chain family. RpoC2 subfamily. As to quaternary structure, in plastids the minimal PEP RNA polymerase catalytic core is composed of four subunits: alpha, beta, beta', and beta''. When a (nuclear-encoded) sigma factor is associated with the core the holoenzyme is formed, which can initiate transcription. The cofactor is Zn(2+).

The protein resides in the plastid. Its subcellular location is the cyanelle. It carries out the reaction RNA(n) + a ribonucleoside 5'-triphosphate = RNA(n+1) + diphosphate. Its function is as follows. DNA-dependent RNA polymerase catalyzes the transcription of DNA into RNA using the four ribonucleoside triphosphates as substrates. The protein is DNA-directed RNA polymerase subunit beta'' of Cyanophora paradoxa.